The primary structure comprises 708 residues: Ion-translocating oxidoreductase complex subunit C (708 aa).

2 consecutive 4Fe-4S ferredoxin-type domains span residues 369 to 397 (GEPQ…QQLY) and 407 to 436 (KATT…VQYF). Cys377, Cys380, Cys383, Cys387, Cys416, Cys419, Cys422, and Cys426 together coordinate [4Fe-4S] cluster. The tract at residues 599–686 (KARKLEQQQS…EEQVDPRKAA (88 aa)) is disordered.

Belongs to the 4Fe4S bacterial-type ferredoxin family. RnfC subfamily. In terms of assembly, the complex is composed of six subunits: RsxA, RsxB, RsxC, RsxD, RsxE and RsxG. The cofactor is [4Fe-4S] cluster.

The protein localises to the cell inner membrane. Part of a membrane-bound complex that couples electron transfer with translocation of ions across the membrane. Required to maintain the reduced state of SoxR. In Escherichia coli (strain 55989 / EAEC), this protein is Ion-translocating oxidoreductase complex subunit C.